A 383-amino-acid chain; its full sequence is 8-amino-7-oxononanoate synthase (383 aa).

Residue Arg23 participates in substrate binding. 110-111 (GF) contacts pyridoxal 5'-phosphate. His135 provides a ligand contact to substrate. Ser181, His209, and Thr235 together coordinate pyridoxal 5'-phosphate. At Lys238 the chain carries N6-(pyridoxal phosphate)lysine. Substrate is bound at residue Thr351.

It belongs to the class-II pyridoxal-phosphate-dependent aminotransferase family. BioF subfamily. In terms of assembly, homodimer. Pyridoxal 5'-phosphate is required as a cofactor.

The catalysed reaction is 6-carboxyhexanoyl-[ACP] + L-alanine + H(+) = (8S)-8-amino-7-oxononanoate + holo-[ACP] + CO2. Its pathway is cofactor biosynthesis; biotin biosynthesis. Catalyzes the decarboxylative condensation of pimeloyl-[acyl-carrier protein] and L-alanine to produce 8-amino-7-oxononanoate (AON), [acyl-carrier protein], and carbon dioxide. The protein is 8-amino-7-oxononanoate synthase of Aliivibrio fischeri (strain ATCC 700601 / ES114) (Vibrio fischeri).